The chain runs to 71 residues: Omega-conotoxin-like CnVIIE (71 aa).

A signal peptide spans 1-22; it reads MKLTCVVIVAVLLLTACQLITA. Positions 23-45 are excised as a propeptide; the sequence is DDSRGTQKHRALRSDTKLSMSTR. 3 disulfides stabilise this stretch: Cys46/Cys61, Cys53/Cys65, and Cys60/Cys70. Position 52 is a 4-hydroxyproline; partial (Pro52). The residue at position 70 (Cys70) is a Cysteine amide.

It belongs to the conotoxin M superfamily. As to expression, expressed by the venom duct.

Its subcellular location is the secreted. In terms of biological role, omega-conotoxins act at presynaptic membranes, they bind and block voltage-gated calcium channels (Cav). The chain is Omega-conotoxin-like CnVIIE from Conus consors (Singed cone).